The primary structure comprises 165 residues: Neurotrophin-3 (165 aa).

A signal peptide spans 1–3 (IQS). A propeptide spanning residues 4 to 119 (TSMDQGSLSE…VLTXTSXXXR (116 aa)) is cleaved from the precursor.

The protein belongs to the NGF-beta family.

It is found in the secreted. Functionally, seems to promote the survival of visceral and proprioceptive sensory neurons. The chain is Neurotrophin-3 (NTF3) from Tropidophis haetianus (Haitian dwarf boa).